We begin with the raw amino-acid sequence, 66 residues long: Large ribosomal subunit protein bL35 (66 aa).

Basic residues predominate over residues 1 to 16 (MPKQKTHRASAKRFKR). The disordered stretch occupies residues 1–21 (MPKQKTHRASAKRFKRTGSGG).

Belongs to the bacterial ribosomal protein bL35 family.

In Streptococcus sanguinis (strain SK36), this protein is Large ribosomal subunit protein bL35.